We begin with the raw amino-acid sequence, 574 residues long: Putative DNA-directed RNA polymerase subunit alpha-like 1 (574 aa).

The segment at 1-352 (MTNNKNFADW…ELFSLFLQTS (352 aa)) is alpha N-terminal domain (alpha-NTD). The segment at 419–574 (PDYDRYNSIT…RERKRGNREF (156 aa)) is alpha C-terminal domain (alpha-CTD). The disordered stretch occupies residues 534–574 (QETLRKEQDEQSSQQQKDQMEKRRWERQNRERERKRGNREF). Residues 551–574 (DQMEKRRWERQNRERERKRGNREF) are compositionally biased toward basic and acidic residues.

Belongs to the RNA polymerase alpha chain family. As to quaternary structure, in plastids the minimal PEP RNA polymerase catalytic core is composed of four subunits: alpha, beta, beta', and beta''. When a (nuclear-encoded) sigma factor is associated with the core the holoenzyme is formed, which can initiate transcription.

Its subcellular location is the plastid. It localises to the chloroplast. It catalyses the reaction RNA(n) + a ribonucleoside 5'-triphosphate = RNA(n+1) + diphosphate. In terms of biological role, DNA-dependent RNA polymerase catalyzes the transcription of DNA into RNA using the four ribonucleoside triphosphates as substrates. The polypeptide is Putative DNA-directed RNA polymerase subunit alpha-like 1 (rpoAL1-A) (Pelargonium hortorum (Common geranium)).